A 265-amino-acid chain; its full sequence is Expansin-like A1 (265 aa).

The N-terminal stretch at Met-1 to Ala-20 is a signal peptide. Positions Ser-41–Lys-147 constitute an Expansin-like EG45 domain. Residues Gly-42–Ile-62 traverse the membrane as a helical segment. N-linked (GlcNAc...) asparagine glycans are attached at residues Asn-99 and Asn-102. Positions Asn-161–Ala-244 constitute an Expansin-like CBD domain.

It belongs to the expansin family. Expansin-like A subfamily.

Its subcellular location is the membrane. The polypeptide is Expansin-like A1 (EXLA1) (Arabidopsis thaliana (Mouse-ear cress)).